Consider the following 531-residue polypeptide: Peptide chain release factor 3 (531 aa).

Residues 13–282 enclose the tr-type G domain; the sequence is SKRRTFAIIS…GLTQWAPSPM (270 aa). GTP contacts are provided by residues 22-29, 90-94, and 144-147; these read SHPDAGKT, DTPGH, and NKLD.

It belongs to the TRAFAC class translation factor GTPase superfamily. Classic translation factor GTPase family. PrfC subfamily.

The protein resides in the cytoplasm. Functionally, increases the formation of ribosomal termination complexes and stimulates activities of RF-1 and RF-2. It binds guanine nucleotides and has strong preference for UGA stop codons. It may interact directly with the ribosome. The stimulation of RF-1 and RF-2 is significantly reduced by GTP and GDP, but not by GMP. This Vibrio cholerae serotype O1 (strain ATCC 39541 / Classical Ogawa 395 / O395) protein is Peptide chain release factor 3.